Consider the following 186-residue polypeptide: Oligoribonuclease (186 aa).

An Exonuclease domain is found at 12–175 (LIWIDLEMTG…DDIKDSIKEL (164 aa)). The active site involves tyrosine 133.

It belongs to the oligoribonuclease family.

The protein resides in the cytoplasm. Its function is as follows. 3'-to-5' exoribonuclease specific for small oligoribonucleotides. The protein is Oligoribonuclease of Wigglesworthia glossinidia brevipalpis.